Here is a 298-residue protein sequence, read N- to C-terminus: MKAENIQLGIAPIGWTNDDLPELGAENTFEQCVSEMALAGYTGCEVGNKYPRDVAVLKHKLDVRGIQICNAWFSTFFVDGKREETIQEFIKHRDFLHAMGAKVIGCSEQSRSIQGTTKAVFKEKPIFNDEDWQRLAEGYNELAKLAAEKGMKVSLHHHMGTGIQTPEEVDRYMSVVNDDVYLLFDSGHLYYSEGCQKAMLAVLEKYIHRIVHVHLKDVRDEVVAEVKAKDLSFLEGVKKGTFTVPGDGVIDFKPIFDILEKYDYKGWMVVEAEQDPALANPFEYALKGRKYIREVAGV.

The protein belongs to the IolE/MocC family. The cofactor is glutathione. Co(2+) is required as a cofactor. Mn(2+) serves as cofactor.

It catalyses the reaction scyllo-inosose = 3D-3,5/4-trihydroxycyclohexane-1,2-dione + H2O. Functionally, catalyzes the dehydration of inosose (2-keto-myo-inositol, 2KMI or 2,4,6/3,5-pentahydroxycyclohexanone) to 3D-(3,5/4)-trihydroxycyclohexane-1,2-dione (D-2,3-diketo-4-deoxy-epi-inositol). This Glaesserella parasuis serovar 5 (strain SH0165) (Haemophilus parasuis) protein is Inosose dehydratase.